We begin with the raw amino-acid sequence, 504 residues long: Peroxisomal catalase (504 aa).

Residues H63 and N136 contribute to the active site. Y345 provides a ligand contact to heme. Positions 502–504 match the Microbody targeting signal motif; that stretch reads NKF.

This sequence belongs to the catalase family. Requires heme as cofactor.

It localises to the peroxisome matrix. The enzyme catalyses 2 H2O2 = O2 + 2 H2O. Catalyzes the degradation of hydrogen peroxide (H(2)O(2)) generated by peroxisomal oxidases to water and oxygen, thereby protecting cells from the toxic effects of hydrogen peroxide. The sequence is that of Peroxisomal catalase (CTA1) from Candida boidinii (Yeast).